Consider the following 176-residue polypeptide: Inorganic pyrophosphatase (176 aa).

Substrate is bound by residues K30, R44, and Y56. Mg(2+) is bound by residues D66, D71, and D103. Y142 provides a ligand contact to substrate.

It belongs to the PPase family. Homohexamer. Mg(2+) is required as a cofactor.

It localises to the cytoplasm. It carries out the reaction diphosphate + H2O = 2 phosphate + H(+). In terms of biological role, catalyzes the hydrolysis of inorganic pyrophosphate (PPi) forming two phosphate ions. This chain is Inorganic pyrophosphatase, found in Vibrio cholerae serotype O1 (strain ATCC 39315 / El Tor Inaba N16961).